A 1366-amino-acid chain; its full sequence is DNA-directed RNA polymerase subunit beta' (1366 aa).

The segment covering 1 to 23 (MTSSKPKKSSRVRKTSKNSKKNN) has biased composition (basic residues). The disordered stretch occupies residues 1–25 (MTSSKPKKSSRVRKTSKNSKKNNKI). Residues C248, C315, C322, and C325 each coordinate Zn(2+). The segment at 1290–1366 (DYTVDMPQSP…LQEEGLLSDE (77 aa)) is disordered. A compositionally biased stretch (polar residues) spans 1295 to 1305 (MPQSPTVSSTA). Low complexity predominate over residues 1354-1366 (LEGLQEEGLLSDE).

It belongs to the RNA polymerase beta' chain family. RpoC2 subfamily. In terms of assembly, in cyanobacteria the RNAP catalytic core is composed of 2 alpha, 1 beta, 1 beta', 1 gamma and 1 omega subunit. When a sigma factor is associated with the core the holoenzyme is formed, which can initiate transcription. It depends on Zn(2+) as a cofactor.

The catalysed reaction is RNA(n) + a ribonucleoside 5'-triphosphate = RNA(n+1) + diphosphate. DNA-dependent RNA polymerase catalyzes the transcription of DNA into RNA using the four ribonucleoside triphosphates as substrates. This chain is DNA-directed RNA polymerase subunit beta', found in Prochlorococcus marinus (strain MIT 9515).